A 321-amino-acid chain; its full sequence is tRNA(Ile)-lysidine synthase (321 aa).

S20–S25 contributes to the ATP binding site.

It belongs to the tRNA(Ile)-lysidine synthase family.

It is found in the cytoplasm. The catalysed reaction is cytidine(34) in tRNA(Ile2) + L-lysine + ATP = lysidine(34) in tRNA(Ile2) + AMP + diphosphate + H(+). Functionally, ligates lysine onto the cytidine present at position 34 of the AUA codon-specific tRNA(Ile) that contains the anticodon CAU, in an ATP-dependent manner. Cytidine is converted to lysidine, thus changing the amino acid specificity of the tRNA from methionine to isoleucine. The polypeptide is tRNA(Ile)-lysidine synthase (Bordetella pertussis (strain Tohama I / ATCC BAA-589 / NCTC 13251)).